Reading from the N-terminus, the 510-residue chain is Amidophosphoribosyltransferase (510 aa).

Cysteine 2 serves as the catalytic Nucleophile. The Glutamine amidotransferase type-2 domain occupies 2-239 (CGILGIVLAN…PGEAVIIPKN (238 aa)). Positions 373 and 374 each coordinate Mg(2+).

The protein in the C-terminal section; belongs to the purine/pyrimidine phosphoribosyltransferase family. It depends on Mg(2+) as a cofactor.

It catalyses the reaction 5-phospho-beta-D-ribosylamine + L-glutamate + diphosphate = 5-phospho-alpha-D-ribose 1-diphosphate + L-glutamine + H2O. It functions in the pathway purine metabolism; IMP biosynthesis via de novo pathway; N(1)-(5-phospho-D-ribosyl)glycinamide from 5-phospho-alpha-D-ribose 1-diphosphate: step 1/2. The protein is Amidophosphoribosyltransferase (ADE4) of Saccharomyces cerevisiae (strain ATCC 204508 / S288c) (Baker's yeast).